The following is a 223-amino-acid chain: Putative C-type lectin protein 51 (223 aa).

The first 31 residues, 1-31, serve as a signal peptide directing secretion; it reads MAKRINFTSCLIFTSCFTAFIVSLCLLVSSC. One can recognise a C-type lectin domain in the interval 111–218; the sequence is QEGRCYHYSR…CDTPRRCLCG (108 aa). Cys193 and Cys209 are oxidised to a cystine.

The chain is Putative C-type lectin protein 51 (51) from Equine herpesvirus 2 (strain 86/87) (EHV-2).